We begin with the raw amino-acid sequence, 80 residues long: MTTLGMTMLVLLLLLPLATCLGDGERSPWDSLLRALRSDPQACEPTISGGEMICRDEVCASTGCNCGYNIAKAHCYCACP.

Positions 1–20 (MTTLGMTMLVLLLLLPLATC) are cleaved as a signal peptide. The propeptide occupies 21 to 36 (LGDGERSPWDSLLRAL).

Contains 4 disulfide bonds. In terms of tissue distribution, expressed by the venom duct.

The protein resides in the secreted. The chain is Conotoxin Cl10.1 from Californiconus californicus (California cone).